The primary structure comprises 164 residues: MKVKFKGKEVTLEGTEIKVGDTFPDFVAVNSSLEPVMLKNTNRVRVFLAVPSVDTPVCDLEVKTFNARASEIDGVSIYTISMDLPFAQSRWCGAEGIKNVTTLSDYRDRAFGKNTGTYIKELGLLARAVFVVDSSNKVTYANYLEEVSGYPNYDEVLQAAQAAK.

In terms of domain architecture, Thioredoxin spans 17-162 (IKVGDTFPDF…YDEVLQAAQA (146 aa)). Catalysis depends on Cys58, which acts as the Cysteine sulfenic acid (-SOH) intermediate. Cys58 and Cys92 are disulfide-bonded.

This sequence belongs to the peroxiredoxin family. Tpx subfamily. In terms of assembly, homodimer.

It catalyses the reaction a hydroperoxide + [thioredoxin]-dithiol = an alcohol + [thioredoxin]-disulfide + H2O. Its function is as follows. Thiol-specific peroxidase that catalyzes the reduction of hydrogen peroxide and organic hydroperoxides to water and alcohols, respectively. Plays a role in cell protection against oxidative stress by detoxifying peroxides. This is Thiol peroxidase from Clostridium acetobutylicum (strain ATCC 824 / DSM 792 / JCM 1419 / IAM 19013 / LMG 5710 / NBRC 13948 / NRRL B-527 / VKM B-1787 / 2291 / W).